A 232-amino-acid polypeptide reads, in one-letter code: 2-C-methyl-D-erythritol 4-phosphate cytidylyltransferase (232 aa).

It belongs to the IspD/TarI cytidylyltransferase family. IspD subfamily.

It carries out the reaction 2-C-methyl-D-erythritol 4-phosphate + CTP + H(+) = 4-CDP-2-C-methyl-D-erythritol + diphosphate. Its pathway is isoprenoid biosynthesis; isopentenyl diphosphate biosynthesis via DXP pathway; isopentenyl diphosphate from 1-deoxy-D-xylulose 5-phosphate: step 2/6. Catalyzes the formation of 4-diphosphocytidyl-2-C-methyl-D-erythritol from CTP and 2-C-methyl-D-erythritol 4-phosphate (MEP). The sequence is that of 2-C-methyl-D-erythritol 4-phosphate cytidylyltransferase from Stenotrophomonas maltophilia (strain K279a).